Consider the following 603-residue polypeptide: NAD 5'-nucleotidase (603 aa).

Positions 1–25 (MLLSKKSASFALSAFAMLFTSVALA) are cleaved as a signal peptide. The Zn(2+) site is built by D44, H46, D94, N126, and H227. Residues R397, R437, F456, and 540 to 546 (YVAGGKD) each bind substrate.

It belongs to the 5'-nucleotidase family. Zn(2+) is required as a cofactor.

The protein resides in the periplasm. The catalysed reaction is a ribonucleoside 5'-phosphate + H2O = a ribonucleoside + phosphate. Functionally, degrades NAD into adenosine and nicotinamide riboside, the latter being subsequently internalized by a specific permease. Also endowed with NAD(P) pyrophosphatase activity. Exhibits a broad substrate specificity, recognizing either mono- or dinucleotide nicotinamides and different adenosine phosphates with a maximal activity on 5'-adenosine monophosphate. This Haemophilus influenzae (strain ATCC 51907 / DSM 11121 / KW20 / Rd) protein is NAD 5'-nucleotidase.